The chain runs to 398 residues: Argininosuccinate synthase (398 aa).

An ATP-binding site is contributed by 8 to 16 (AYSGGLDTS). Tyr87 contributes to the L-citrulline binding site. An ATP-binding site is contributed by Gly117. The L-aspartate site is built by Thr119, Asn123, and Asp124. L-citrulline is bound at residue Asn123. L-citrulline-binding residues include Arg127, Ser175, Glu259, and Tyr271.

The protein belongs to the argininosuccinate synthase family. Type 1 subfamily. In terms of assembly, homotetramer.

The protein resides in the cytoplasm. It catalyses the reaction L-citrulline + L-aspartate + ATP = 2-(N(omega)-L-arginino)succinate + AMP + diphosphate + H(+). The protein operates within amino-acid biosynthesis; L-arginine biosynthesis; L-arginine from L-ornithine and carbamoyl phosphate: step 2/3. The protein is Argininosuccinate synthase of Corynebacterium kroppenstedtii (strain DSM 44385 / JCM 11950 / CIP 105744 / CCUG 35717).